A 566-amino-acid polypeptide reads, in one-letter code: Putative sulfite reductase [NADPH] hemoprotein beta-component (566 aa).

[4Fe-4S] cluster contacts are provided by Cys430, Cys436, Cys475, and Cys479. Cys479 contacts siroheme.

Belongs to the nitrite and sulfite reductase 4Fe-4S domain family. As to quaternary structure, alpha(8)-beta(8). The alpha component is a flavoprotein, the beta component is a hemoprotein. The cofactor is siroheme. [4Fe-4S] cluster is required as a cofactor.

It carries out the reaction hydrogen sulfide + 3 NADP(+) + 3 H2O = sulfite + 3 NADPH + 4 H(+). Its pathway is sulfur metabolism; hydrogen sulfide biosynthesis; hydrogen sulfide from sulfite (NADPH route): step 1/1. Component of the sulfite reductase complex that catalyzes the 6-electron reduction of sulfite to sulfide. This is one of several activities required for the biosynthesis of L-cysteine from sulfate. The sequence is that of Putative sulfite reductase [NADPH] hemoprotein beta-component from Buchnera aphidicola subsp. Schizaphis graminum (strain Sg).